Consider the following 243-residue polypeptide: MTEPNNTDLLDLATPYALHAVSIDERFEIDRWLATAPPEVADAFTDEVRSVQETMAVLSAATATEPPAHLRDNVLAMVADDPVRDLGSARRRRGGESRWRTAVLAAAAVAVVGLGALGVGLALRPAVSPTTADQVFAAPDVQTVSGPIPGGGTATVVFSKERDAGVLVMNDVAPPKPGTVYQMWLVGSDGPHSAGTMDDKAISPSTTAVLSDIGTSQALAFTVEPPGGSQRPTSPAFAELPLT.

The Cytoplasmic portion of the chain corresponds to 1-102 (MTEPNNTDLL…RGGESRWRTA (102 aa)). Residues 103–123 (VLAAAAVAVVGLGALGVGLAL) form a helical membrane-spanning segment. Residues 124 to 243 (RPAVSPTTAD…SPAFAELPLT (120 aa)) are Extracellular-facing. The disordered stretch occupies residues 223–243 (VEPPGGSQRPTSPAFAELPLT).

It belongs to the anti-sigma-K factor family.

The protein localises to the cell membrane. Its function is as follows. An anti-sigma factor for extracytoplasmic function (ECF) sigma factor SigK. ECF sigma factors are held in an inactive form by an anti-sigma factor until released by regulated intramembrane proteolysis (RIP). RIP occurs when an extracytoplasmic signal triggers a concerted proteolytic cascade to transmit information and elicit cellular responses. The membrane-spanning regulatory substrate protein is first cut extracytoplasmically (site-1 protease, S1P), then within the membrane itself (site-2 protease, S2P, Rip1), while cytoplasmic proteases finish degrading the regulatory protein, liberating the sigma factor. This is Anti-sigma-K factor RskA (rskA) from Mycobacterium sp. (strain JLS).